A 504-amino-acid polypeptide reads, in one-letter code: ATP synthase subunit beta (504 aa).

181 to 188 (GGAGVGKT) is a binding site for ATP.

This sequence belongs to the ATPase alpha/beta chains family. As to quaternary structure, F-type ATPases have 2 components, CF(1) - the catalytic core - and CF(0) - the membrane proton channel. CF(1) has five subunits: alpha(3), beta(3), gamma(1), delta(1), epsilon(1). CF(0) has three main subunits: a(1), b(2) and c(9-12). The alpha and beta chains form an alternating ring which encloses part of the gamma chain. CF(1) is attached to CF(0) by a central stalk formed by the gamma and epsilon chains, while a peripheral stalk is formed by the delta and b chains.

Its subcellular location is the cell inner membrane. The catalysed reaction is ATP + H2O + 4 H(+)(in) = ADP + phosphate + 5 H(+)(out). Functionally, produces ATP from ADP in the presence of a proton gradient across the membrane. The catalytic sites are hosted primarily by the beta subunits. The sequence is that of ATP synthase subunit beta from Ehrlichia ruminantium (strain Gardel).